The chain runs to 388 residues: Mannosyl-3-phosphoglycerate synthase (388 aa).

Belongs to the glycosyltransferase 2 family.

It localises to the cytoplasm. It carries out the reaction (2R)-3-phosphoglycerate + GDP-alpha-D-mannose = 2-O-(alpha-D-mannosyl)-3-phosphoglycerate + GDP + H(+). Its pathway is carbohydrate biosynthesis; 2-(alpha-D-mannosyl)-D-glycerate biosynthesis; 2-(alpha-D-mannosyl)-D-glycerate from GDP-alpha-D-mannose (MPG route): step 1/2. In terms of biological role, transfers a mannosyl group from GDP-mannose to phosphoglycerate to form mannosyl-3-phosphoglycerate (MPG). This Aeropyrum pernix (strain ATCC 700893 / DSM 11879 / JCM 9820 / NBRC 100138 / K1) protein is Mannosyl-3-phosphoglycerate synthase (mngA).